Consider the following 354-residue polypeptide: Histidinol-phosphate aminotransferase (354 aa).

At lysine 210 the chain carries N6-(pyridoxal phosphate)lysine.

Belongs to the class-II pyridoxal-phosphate-dependent aminotransferase family. Histidinol-phosphate aminotransferase subfamily. Homodimer. It depends on pyridoxal 5'-phosphate as a cofactor.

The enzyme catalyses L-histidinol phosphate + 2-oxoglutarate = 3-(imidazol-4-yl)-2-oxopropyl phosphate + L-glutamate. Its pathway is amino-acid biosynthesis; L-histidine biosynthesis; L-histidine from 5-phospho-alpha-D-ribose 1-diphosphate: step 7/9. The polypeptide is Histidinol-phosphate aminotransferase (Clostridium botulinum (strain ATCC 19397 / Type A)).